Consider the following 117-residue polypeptide: Immunity protein BC_0921 (117 aa).

In terms of assembly, probably interacts with cognate toxin BC_0920 but not with other non-cognate toxins. The interaction inhibits the toxic activity of BC_0920.

Its subcellular location is the cytoplasm. Immunity component of an LXG toxin-immunity module. Neutralizes the RNase activity of cognate toxin BC_0920. Probably does not have immunity protein activity on other toxins with the LXG domain. The polypeptide is Immunity protein BC_0921 (Bacillus cereus (strain ATCC 14579 / DSM 31 / CCUG 7414 / JCM 2152 / NBRC 15305 / NCIMB 9373 / NCTC 2599 / NRRL B-3711)).